Reading from the N-terminus, the 789-residue chain is Ent-kaurene synthase TSP4, chloroplastic (789 aa).

The Mg(2+) site is built by D540 and D544. A DDXXD motif motif is present at residues D540–D544. Residues A638–G656 traverse the membrane as a helical segment. Residues N684, R687, and E692 each coordinate Mg(2+).

Belongs to the terpene synthase family. Mg(2+) serves as cofactor. In terms of tissue distribution, expressed in leaves and fruits, including trichomes.

It is found in the plastid. Its subcellular location is the chloroplast membrane. It carries out the reaction ent-copalyl diphosphate = ent-kaur-16-ene + diphosphate. The protein operates within plant hormone biosynthesis; gibberellin biosynthesis. In terms of biological role, involved in the biosynthesis of labdane-type diterpenoid including cleroda-dienols, and peregrinol lactones and furan derivatives, dopaminergic diterpenoids that can bind to dopamine receptors in the human pituitary gland, have probably ability to lower prolactin levels, and are used to treat menstrual cycle disorders (e.g. premenstrual syndrome and mastodynia). Terpene synthase that produces ent-kaurene from ent-copalyl diphosphate. In Vitex agnus-castus (Chaste tree), this protein is Ent-kaurene synthase TSP4, chloroplastic.